We begin with the raw amino-acid sequence, 359 residues long: Peptide chain release factor 1 (359 aa).

Residue Gln235 is modified to N5-methylglutamine. The tract at residues 283-309 (QKAESERSQARRSQVGSGDRSERIRTY) is disordered.

It belongs to the prokaryotic/mitochondrial release factor family. In terms of processing, methylated by PrmC. Methylation increases the termination efficiency of RF1.

It localises to the cytoplasm. Functionally, peptide chain release factor 1 directs the termination of translation in response to the peptide chain termination codons UAG and UAA. In Brucella abortus (strain S19), this protein is Peptide chain release factor 1.